Here is a 189-residue protein sequence, read N- to C-terminus: GTPase HRas (189 aa).

Position 1 is an N-acetylmethionine (Met1). Thr2 bears the N-acetylthreonine; in GTPase HRas, N-terminally processed mark. GTP is bound at residue 10 to 17 (GAGGVGKS). Residues 32–40 (YDPTIEDSY) carry the Effector region motif. GTP-binding positions include 57–61 (DTAGQ) and 116–119 (NKCD). Cys118 bears the S-nitrosocysteine mark. Positions 166 to 185 (HKLRKLNPPDESGPGCMNCK) are hypervariable region. Residues Cys181 and Cys184 are each lipidated (S-palmitoyl cysteine). Cysteine methyl ester is present on Cys186. Cys186 carries the S-farnesyl cysteine lipid modification. A propeptide spans 187–189 (VIS) (removed in mature form).

It belongs to the small GTPase superfamily. Ras family. In terms of processing, palmitoylated by the ZDHHC9-GOLGA7 complex. A continuous cycle of de- and re-palmitoylation regulates rapid exchange between plasma membrane and Golgi.

The protein resides in the cell membrane. It localises to the golgi apparatus membrane. The enzyme catalyses GTP + H2O = GDP + phosphate + H(+). Alternates between an inactive form bound to GDP and an active form bound to GTP. Activated by a guanine nucleotide-exchange factor (GEF) and inactivated by a GTPase-activating protein (GAP). Functionally, ras proteins bind GDP/GTP and possess intrinsic GTPase activity. The chain is GTPase HRas (HRAS) from Gallus gallus (Chicken).